Here is a 231-residue protein sequence, read N- to C-terminus: Translin-associated protein X homolog (231 aa).

The protein belongs to the translin family.

The protein resides in the cytoplasm. It localises to the nucleus. The sequence is that of Translin-associated protein X homolog from Schizosaccharomyces pombe (strain 972 / ATCC 24843) (Fission yeast).